The primary structure comprises 662 residues: UPF0313 protein CPE1196 (662 aa).

The Radical SAM core domain occupies 296–567; that stretch reads AIEEVKFSLV…AMQRALLQFK (272 aa). Residues cysteine 310, cysteine 314, and cysteine 317 each contribute to the [4Fe-4S] cluster site. The segment at 597–662 is disordered; it reads RDKNSFGKGN…QRGSKGKKRR (66 aa). Residues 618–632 are compositionally biased toward basic and acidic residues; the sequence is NRNENSGRRESEDKK. Positions 633-644 are enriched in basic residues; the sequence is RSSHSKKQRGNK.

It belongs to the UPF0313 family. [4Fe-4S] cluster is required as a cofactor.

In Clostridium perfringens (strain 13 / Type A), this protein is UPF0313 protein CPE1196.